Here is a 3473-residue protein sequence, read N- to C-terminus: AP2/ERF domain-containing protein PFD0985w (3473 aa).

9 disordered regions span residues Asn-35 to Asn-61, Lys-366 to Cys-450, Asn-647 to Lys-704, Asn-750 to Lys-801, Val-1096 to Asn-1196, Asp-1300 to Gly-1328, His-1388 to Arg-1418, Asn-1773 to Val-1807, and Ile-1864 to Ser-1898. Composition is skewed to low complexity over residues Asn-44–Asn-61, Asn-396–Asn-442, and Asn-647–Asn-666. Residues Thr-683 to Asp-694 show a composition bias toward basic and acidic residues. Positions Ile-751–Asn-768 are enriched in low complexity. Residues Asn-785–Lys-801 are compositionally biased toward basic residues. Over residues Asn-1098–Asn-1156 the composition is skewed to low complexity. Over residues Lys-1160–Asn-1171 the composition is skewed to acidic residues. Positions Thr-1182–Asn-1196 are enriched in low complexity. Composition is skewed to polar residues over residues Val-1314–Ser-1326 and Arg-1390–Arg-1412. A compositionally biased stretch (low complexity) spans Asn-1773 to Asn-1805. Basic residues predominate over residues Leu-1881–Lys-1893. A DNA-binding region (AP2/ERF 1) is located at residues Pro-1957 to Ile-2011. Disordered stretches follow at residues Glu-2068–Asn-2088, Gln-2319–Lys-2343, Thr-2387–Ser-2470, Leu-2520–Asn-2584, Leu-2609–Asn-2677, Met-2840–Lys-2860, Asn-2881–Pro-2902, and Lys-2937–Glu-2960. Positions Lys-2333–Ser-2342 are enriched in basic residues. Low complexity-rich tracts occupy residues Asn-2388–Asp-2400 and Asp-2409–Asp-2460. The segment covering Asp-2525–Leu-2542 has biased composition (acidic residues). Low complexity-rich tracts occupy residues Asn-2557–Asn-2584 and Asn-2615–Asn-2624. A compositionally biased stretch (polar residues) spans Leu-2663–Ala-2675. Over residues Asn-2841–Asn-2858 the composition is skewed to low complexity. A compositionally biased stretch (basic and acidic residues) spans Asn-2943–Thr-2953. The segment at residues Ser-3268–Asn-3321 is a DNA-binding region (AP2/ERF 2). Residues Lys-3369 to Asp-3391 show a composition bias toward low complexity. The interval Lys-3369–Glu-3473 is disordered. A compositionally biased stretch (acidic residues) spans Asn-3392–Asn-3403. Over residues Asn-3404–Asp-3457 the composition is skewed to low complexity.

The protein localises to the nucleus. This Plasmodium falciparum (isolate 3D7) protein is AP2/ERF domain-containing protein PFD0985w.